An 82-amino-acid chain; its full sequence is ATP synthase subunit c, chloroplastic (82 aa).

Transmembrane regions (helical) follow at residues 4–24 and 57–77; these read IISA…AIGP and LAFM…LLFA.

Belongs to the ATPase C chain family. F-type ATPases have 2 components, F(1) - the catalytic core - and F(0) - the membrane proton channel. F(1) has five subunits: alpha(3), beta(3), gamma(1), delta(1), epsilon(1). F(0) has four main subunits: a(1), b(1), b'(1) and c(10-14). The alpha and beta chains form an alternating ring which encloses part of the gamma chain. F(1) is attached to F(0) by a central stalk formed by the gamma and epsilon chains, while a peripheral stalk is formed by the delta, b and b' chains.

Its subcellular location is the plastid. The protein localises to the chloroplast thylakoid membrane. Its function is as follows. F(1)F(0) ATP synthase produces ATP from ADP in the presence of a proton or sodium gradient. F-type ATPases consist of two structural domains, F(1) containing the extramembraneous catalytic core and F(0) containing the membrane proton channel, linked together by a central stalk and a peripheral stalk. During catalysis, ATP synthesis in the catalytic domain of F(1) is coupled via a rotary mechanism of the central stalk subunits to proton translocation. In terms of biological role, key component of the F(0) channel; it plays a direct role in translocation across the membrane. A homomeric c-ring of between 10-14 subunits forms the central stalk rotor element with the F(1) delta and epsilon subunits. The sequence is that of ATP synthase subunit c, chloroplastic from Trieres chinensis (Marine centric diatom).